We begin with the raw amino-acid sequence, 359 residues long: Peptide methionine sulfoxide reductase MsrA/MsrB (359 aa).

Positions 36–189 (RVIYLAGGCF…PGGYCHIDLK (154 aa)) are peptide methionine sulfoxide reductase A. The active site involves Cys44. The region spanning 206-329 (DEVLKKKLTK…NSAALRFIPL (124 aa)) is the MsrB domain. Residue Cys318 is the Nucleophile of the active site.

In the N-terminal section; belongs to the MsrA Met sulfoxide reductase family. The protein in the C-terminal section; belongs to the MsrB Met sulfoxide reductase family.

The enzyme catalyses L-methionyl-[protein] + [thioredoxin]-disulfide + H2O = L-methionyl-(S)-S-oxide-[protein] + [thioredoxin]-dithiol. It carries out the reaction [thioredoxin]-disulfide + L-methionine + H2O = L-methionine (S)-S-oxide + [thioredoxin]-dithiol. The catalysed reaction is L-methionyl-[protein] + [thioredoxin]-disulfide + H2O = L-methionyl-(R)-S-oxide-[protein] + [thioredoxin]-dithiol. Its function is as follows. Has an important function as a repair enzyme for proteins that have been inactivated by oxidation. Catalyzes the reversible oxidation-reduction of methionine sulfoxide in proteins to methionine. This Helicobacter pylori (strain J99 / ATCC 700824) (Campylobacter pylori J99) protein is Peptide methionine sulfoxide reductase MsrA/MsrB (msrAB).